Reading from the N-terminus, the 255-residue chain is uncharacterized protein (255 aa).

Positions 1–28 (MFKLNFKNNYKVLTLLFSLTLSMFVSNA) are cleaved as a signal peptide. Asparagine 38, asparagine 61, and asparagine 83 each carry an N-linked (GlcNAc...) asparagine glycan.

The protein resides in the secreted. This is an uncharacterized protein from Dictyostelium discoideum (Social amoeba).